We begin with the raw amino-acid sequence, 919 residues long: Calcium-transporting ATPase type 2C member 1 (919 aa).

At 1–70 (MKVARFQKIP…NEFDISEDEP (70 aa)) the chain is on the cytoplasmic side. A helical transmembrane segment spans residues 71–91 (LWKKYISQFKNPLIMLLLASA). At 92–104 (VISVLMHQFDDAV) the chain is on the lumenal side. A helical transmembrane segment spans residues 105–123 (SITVAILIVVTVAFVQEYR). Topologically, residues 124–262 (SEKSLEELSK…APKTPLQKSM (139 aa)) are cytoplasmic. A helical membrane pass occupies residues 263 to 282 (DLLGKQLSFYSFGIIGIIML). At 283 to 294 (VGWLLGKDILEM) the chain is on the lumenal side. Residues 295–312 (FTISVSLAVAAIPEGLPI) traverse the membrane as a helical segment. Valine 303, alanine 304, isoleucine 306, and glutamate 308 together coordinate Ca(2+). Over 313 to 699 (VVTVTLALGV…EEGKGIYNNI (387 aa)) the chain is Cytoplasmic. Residue aspartate 350 is the 4-aspartylphosphate intermediate of the active site. Mg(2+) contacts are provided by aspartate 644 and aspartate 648. A helical membrane pass occupies residues 700–719 (KNFVRFQLSTSIAALTLISL). The Lumenal portion of the chain corresponds to 720–729 (ATLMNFPNPL). A helical membrane pass occupies residues 730–750 (NAMQILWINIIMDGPPAQSLG). Ca(2+) contacts are provided by asparagine 738 and aspartate 742. The Cytoplasmic segment spans residues 751–770 (VEPVDKDVIRKPPRNWKDSI). Residues 771 to 793 (LTKNLILKILVSSIIIVCGTLFV) form a helical membrane-spanning segment. At 794-808 (FWRELRDNVITPRDT) the chain is on the lumenal side. A helical transmembrane segment spans residues 809–828 (TMTFTCFVFFDMFNALSSRS). Topologically, residues 829-841 (QTKSVFEIGLCSN) are cytoplasmic. Residues 842–860 (RMFCYAVLGSIMGQLLVIY) form a helical membrane-spanning segment. Over 861–875 (FPPLQKVFQTESLSI) the chain is Lumenal. The chain crosses the membrane as a helical span at residues 876–896 (LDLLFLLGLTSSVCIVAEIIK). Residues 897 to 919 (KVERSREKIQKHVSSTSSSFLEV) are Cytoplasmic-facing.

Belongs to the cation transport ATPase (P-type) (TC 3.A.3) family. Type IIA subfamily. Monomer. Homodimer. Found in most tissues except colon, thymus, spleen and leukocytes. Expressed in keratinocytes (at protein level).

The protein localises to the golgi apparatus. The protein resides in the trans-Golgi network membrane. It is found in the golgi stack membrane. It catalyses the reaction Ca(2+)(in) + ATP + H2O = Ca(2+)(out) + ADP + phosphate + H(+). The catalysed reaction is Mn(2+)(in) + ATP + H2O = Mn(2+)(out) + ADP + phosphate + H(+). Functionally, ATP-driven pump that supplies the Golgi apparatus with Ca(2+) and Mn(2+) ions, both essential cofactors for processing and trafficking of newly synthesized proteins in the secretory pathway. Within a catalytic cycle, acquires Ca(2+) or Mn(2+) ions on the cytoplasmic side of the membrane and delivers them to the lumenal side. The transfer of ions across the membrane is coupled to ATP hydrolysis and is associated with a transient phosphorylation that shifts the pump conformation from inward-facing to outward-facing state. Plays a primary role in the maintenance of Ca(2+) homeostasis in the trans-Golgi compartment with a functional impact on Golgi and post-Golgi protein sorting as well as a structural impact on cisternae morphology. Responsible for loading the Golgi stores with Ca(2+) ions in keratinocytes, contributing to keratinocyte differentiation and epidermis integrity. Participates in Ca(2+) and Mn(2+) ions uptake into the Golgi store of hippocampal neurons and regulates protein trafficking required for neural polarity. May also play a role in the maintenance of Ca(2+) and Mn(2+) homeostasis and signaling in the cytosol while preventing cytotoxicity. This is Calcium-transporting ATPase type 2C member 1 from Homo sapiens (Human).